The primary structure comprises 279 residues: Osmoprotective compounds uptake permease protein GgtC (279 aa).

Transmembrane regions (helical) follow at residues 7 to 27, 58 to 78, 90 to 110, 120 to 140, 146 to 166, 202 to 222, and 247 to 267; these read LLFL…LSFF, LWLV…AVLV, IIFL…KFVY, IGLL…WLVE, FALI…ILSA, LLVV…IVFV, and FGRG…VMIT. The ABC transmembrane type-1 domain maps to 53-270; sequence FRNNLLWLVL…IVPVMITNIR (218 aa).

Belongs to the binding-protein-dependent transport system permease family. In terms of assembly, the complex is composed of two ATP-binding proteins (GgtA), two transmembrane proteins (GgtC and GgtD) and a solute-binding protein (GgtB).

Its subcellular location is the cell membrane. Its function is as follows. Part of the ABC transporter complex GgtABCD involved in the uptake of the osmoprotective compounds glucosylglycerol (GG), sucrose and trehalose. Responsible for the translocation of the substrate across the membrane. In Synechocystis sp. (strain ATCC 27184 / PCC 6803 / Kazusa), this protein is Osmoprotective compounds uptake permease protein GgtC.